The following is a 392-amino-acid chain: DNA-directed RNA polymerase subunit Rpo1C (392 aa).

This sequence belongs to the RNA polymerase beta' chain family. In terms of assembly, part of the RNA polymerase complex.

The protein resides in the cytoplasm. The enzyme catalyses RNA(n) + a ribonucleoside 5'-triphosphate = RNA(n+1) + diphosphate. Its function is as follows. DNA-dependent RNA polymerase (RNAP) catalyzes the transcription of DNA into RNA using the four ribonucleoside triphosphates as substrates. Forms part of the jaw domain. The polypeptide is DNA-directed RNA polymerase subunit Rpo1C (Saccharolobus islandicus (strain Y.N.15.51 / Yellowstone #2) (Sulfolobus islandicus)).